Reading from the N-terminus, the 115-residue chain is NADH-ubiquinone oxidoreductase chain 3 (115 aa).

Transmembrane regions (helical) follow at residues 4 to 24, 55 to 75, and 84 to 104; these read ILTL…AFWL, FFLV…LLPL, and SYLT…GLAY.

It belongs to the complex I subunit 3 family. Core subunit of respiratory chain NADH dehydrogenase (Complex I) which is composed of 45 different subunits. Interacts with TMEM186. Interacts with TMEM242.

Its subcellular location is the mitochondrion inner membrane. The catalysed reaction is a ubiquinone + NADH + 5 H(+)(in) = a ubiquinol + NAD(+) + 4 H(+)(out). Its function is as follows. Core subunit of the mitochondrial membrane respiratory chain NADH dehydrogenase (Complex I) which catalyzes electron transfer from NADH through the respiratory chain, using ubiquinone as an electron acceptor. Essential for the catalytic activity of complex I. This is NADH-ubiquinone oxidoreductase chain 3 from Necromys lactens (Rufous-bellied bolo mouse).